Reading from the N-terminus, the 61-residue chain is Small ribosomal subunit protein uS14 (61 aa).

Zn(2+) contacts are provided by cysteine 24, cysteine 27, cysteine 40, and cysteine 43.

The protein belongs to the universal ribosomal protein uS14 family. Zinc-binding uS14 subfamily. In terms of assembly, part of the 30S ribosomal subunit. Contacts proteins S3 and S10. Zn(2+) serves as cofactor.

Binds 16S rRNA, required for the assembly of 30S particles and may also be responsible for determining the conformation of the 16S rRNA at the A site. The chain is Small ribosomal subunit protein uS14 from Mycoplasma capricolum subsp. capricolum (strain California kid / ATCC 27343 / NCTC 10154).